We begin with the raw amino-acid sequence, 162 residues long: NADH-quinone oxidoreductase subunit I (162 aa).

2 4Fe-4S ferredoxin-type domains span residues 52-82 and 93-122; these read LRRYPNGEERCIACKLCEAICPAQAITIEAG and TRYDIDMVKCIYCGMCQEACPVDAIVEGPN. The [4Fe-4S] cluster site is built by Cys-62, Cys-65, Cys-68, Cys-72, Cys-102, Cys-105, Cys-108, and Cys-112.

It belongs to the complex I 23 kDa subunit family. NDH-1 is composed of 14 different subunits. Subunits NuoA, H, J, K, L, M, N constitute the membrane sector of the complex. The cofactor is [4Fe-4S] cluster.

It localises to the cell inner membrane. It catalyses the reaction a quinone + NADH + 5 H(+)(in) = a quinol + NAD(+) + 4 H(+)(out). Functionally, NDH-1 shuttles electrons from NADH, via FMN and iron-sulfur (Fe-S) centers, to quinones in the respiratory chain. The immediate electron acceptor for the enzyme in this species is believed to be ubiquinone. Couples the redox reaction to proton translocation (for every two electrons transferred, four hydrogen ions are translocated across the cytoplasmic membrane), and thus conserves the redox energy in a proton gradient. This Methylorubrum extorquens (strain PA1) (Methylobacterium extorquens) protein is NADH-quinone oxidoreductase subunit I.